The following is a 96-amino-acid chain: Large ribosomal subunit protein uL15 (96 aa).

Belongs to the universal ribosomal protein uL15 family. In terms of assembly, part of the 50S ribosomal subunit.

Functionally, binds to the 23S rRNA. The chain is Large ribosomal subunit protein uL15 (rplO) from Streptomyces scabiei.